The following is a 352-amino-acid chain: Ribosomal RNA large subunit methyltransferase M (352 aa).

S-adenosyl-L-methionine is bound by residues S184, 217–220, D236, D256, and D272; that span reads APGG. The active-site Proton acceptor is K301.

It belongs to the class I-like SAM-binding methyltransferase superfamily. RNA methyltransferase RlmE family. RlmM subfamily. In terms of assembly, monomer.

The protein resides in the cytoplasm. It carries out the reaction cytidine(2498) in 23S rRNA + S-adenosyl-L-methionine = 2'-O-methylcytidine(2498) in 23S rRNA + S-adenosyl-L-homocysteine + H(+). Functionally, catalyzes the 2'-O-methylation at nucleotide C2498 in 23S rRNA. In Pseudomonas aeruginosa (strain LESB58), this protein is Ribosomal RNA large subunit methyltransferase M.